Reading from the N-terminus, the 437-residue chain is O-methyltransferase 3 (437 aa).

Residues 1–21 (MNNKTSNGDITNDEPTVGSKR) are disordered. A coiled-coil region spans residues 146–180 (SDNLYQDKDDLEKQEKEREKKMANLLSKNVDIKEL). The segment at 408-437 (DPINNNNNNNNNNNNNNNNTTTTTSTTTTN) is disordered. Low complexity predominate over residues 411–437 (NNNNNNNNNNNNNNNNTTTTTSTTTTN).

This sequence belongs to the methyltransferase superfamily. METL family.

Its function is as follows. Probable methyltransferase. The chain is O-methyltransferase 3 (omt3) from Dictyostelium discoideum (Social amoeba).